Reading from the N-terminus, the 297-residue chain is 4-hydroxy-tetrahydrodipicolinate synthase (297 aa).

Thr-47 contacts pyruvate. Catalysis depends on Tyr-135, which acts as the Proton donor/acceptor. Catalysis depends on Lys-163, which acts as the Schiff-base intermediate with substrate. Ile-205 is a binding site for pyruvate.

Belongs to the DapA family. In terms of assembly, homotetramer; dimer of dimers.

It is found in the cytoplasm. The enzyme catalyses L-aspartate 4-semialdehyde + pyruvate = (2S,4S)-4-hydroxy-2,3,4,5-tetrahydrodipicolinate + H2O + H(+). It functions in the pathway amino-acid biosynthesis; L-lysine biosynthesis via DAP pathway; (S)-tetrahydrodipicolinate from L-aspartate: step 3/4. Catalyzes the condensation of (S)-aspartate-beta-semialdehyde [(S)-ASA] and pyruvate to 4-hydroxy-tetrahydrodipicolinate (HTPA). The polypeptide is 4-hydroxy-tetrahydrodipicolinate synthase (Cytophaga hutchinsonii (strain ATCC 33406 / DSM 1761 / CIP 103989 / NBRC 15051 / NCIMB 9469 / D465)).